The chain runs to 518 residues: Alpha-ionylideneethane synthase abl3 (518 aa).

Disordered stretches follow at residues 294–355 (AAPG…SVFE) and 440–466 (KAPP…QRSK). Residues 299–339 (TSSDNSSDNRSSSISSTSSTGTDGSGAGDASSVHSSGVHSD) show a composition bias toward low complexity.

This sequence belongs to the alpha-ionylideneethane synthase family.

Its pathway is hormone biosynthesis. Functionally, alpha-ionylideneethane synthase involved in the biosynthesis of abscisic acid (ABA), a phytohormone that acts antagonistically toward salicylic acid (SA), jasmonic acid (JA) and ethylene (ETH) signaling, to impede plant defense responses. During pathogen-host interaction, ABA plays a dual role in disease severity by increasing plant susceptibility and accelerating pathogenesis in the fungus itself. The first step of the pathway catalyzes the reaction from farnesyl diphosphate to alpha-ionylideneethane performed by the alpha-ionylideneethane synthase ABA3 via a three-step reaction mechanism involving 2 neutral intermediates, beta-farnesene and allofarnesene. The cytochrome P450 monooxygenase ABA1 might then be involved in the conversion of alpha-ionylideneethane to alpha-ionylideneacetic acid. Alpha-ionylideneacetic acid is further converted to abscisic acid in 2 steps involving the cytochrome P450 monooxygenase ABA2 and the short-chain dehydrogenase/reductase ABA4, via the intermediates 1'-deoxy-ABA or 1',4'-trans-diol-ABA, depending on the order of action of these 2 enzymes. ABA2 is responsible for the hydroxylation of carbon atom C-1' and ABA4 might be involved in the oxidation of the C-4' carbon atom. In Pyricularia oryzae (strain Y34) (Rice blast fungus), this protein is Alpha-ionylideneethane synthase abl3.